The primary structure comprises 215 residues: Probable maleylacetoacetate isomerase (215 aa).

The 84-residue stretch at 2-85 folds into the GST N-terminal domain; the sequence is MSLILYGYWR…YLDETYPAPR (84 aa). One can recognise a GST C-terminal domain in the interval 90–215; it reads RGAERYQVKA…AAPENQPDAC (126 aa).

Belongs to the GST superfamily. Zeta family.

The enzyme catalyses 4-maleylacetoacetate = 4-fumarylacetoacetate. Its pathway is amino-acid degradation; L-phenylalanine degradation; acetoacetate and fumarate from L-phenylalanine: step 5/6. The protein is Probable maleylacetoacetate isomerase (maiA) of Vibrio cholerae serotype O1 (strain ATCC 39315 / El Tor Inaba N16961).